The primary structure comprises 1378 residues: Cell surface hyaluronidase (1378 aa).

A disordered region spans residues 1–77 (MQVNDGPSSH…GNRREQAQNQ (77 aa)). Residues 1-82 (MQVNDGPSSH…QAQNQQRKNT (82 aa)) lie on the Cytoplasmic side of the membrane. Positions 36–58 (RSPPPAKAPPPPPLKPPVPPPAR) are enriched in pro residues. The chain crosses the membrane as a helical; Signal-anchor for type II membrane protein span at residues 83–103 (YICVGIFFGIFLLILILVLSL). Residues 104–1378 (TSKDVLDENC…MDLELLKKIS (1275 aa)) lie on the Extracellular side of the membrane. The 127-residue stretch at 121 to 247 (RSWKPGHDLK…ERMSWTFLTR (127 aa)) folds into the G8 domain. Asparagine 171, asparagine 264, asparagine 360, asparagine 527, and asparagine 639 each carry an N-linked (GlcNAc...) asparagine glycan. One can recognise a GG-type lectin 1 domain in the interval 257-414 (GDHAFQKNFS…YPTTGFQVDA (158 aa)). One copy of the PbH1 1 repeat lies at 672–694 (HPNNHLISNSAAGSQDAGIWYVF). An N-linked (GlcNAc...) asparagine glycan is attached at asparagine 696. A PbH1 2 repeat occupies 714–736 (TPLGTFFNNRVHSNFKAGLFIDR). N-linked (GlcNAc...) asparagine glycans are attached at residues asparagine 742, asparagine 854, asparagine 905, asparagine 996, asparagine 1069, asparagine 1160, and asparagine 1221. Positions 1203 to 1363 (NSYLQTQIKS…LEEYSCPPKK (161 aa)) constitute a GG-type lectin 2 domain.

This sequence belongs to the CEMIP family. It depends on Ca(2+) as a cofactor.

The protein resides in the cell membrane. It carries out the reaction Random hydrolysis of (1-&gt;4)-linkages between N-acetyl-beta-D-glucosamine and D-glucuronate residues in hyaluronate.. In terms of biological role, cell surface hyaluronidase that mediates the initial cleavage of extracellular high-molecular-weight hyaluronan into intermediate-size hyaluronan. Acts as a regulator of angiogenesis in embryos by mediating degradation of extracellular hyaluronan, thereby promoting VEGF signaling. Acts as a regulator of heart development during myocardial and endocardial morphogenesis: involved in the looping stage of heart morphogenesis. Stimulates migration of endocardial cells and increases both myocardial and endocardial fusion. Involved in the restriction of endocardial cushions (ECs) formation to the atrioventricular canal (AVC). Also required for muscle fiber attachment. Is very specific to hyaluronan; not able to cleave chondroitin sulfate or dermatan sulfate. This is Cell surface hyaluronidase (cemip2) from Danio rerio (Zebrafish).